Here is a 389-residue protein sequence, read N- to C-terminus: Phospho-N-acetylmuramoyl-pentapeptide-transferase (389 aa).

A run of 11 helical transmembrane segments spans residues arginine 25–isoleucine 45, methionine 74–glycine 94, phenylalanine 97–tyrosine 117, phenylalanine 134–glutamate 154, tryptophan 167–phenylalanine 187, valine 190–serine 210, glycine 222–methionine 242, alanine 259–phenylalanine 279, valine 286–isoleucine 306, isoleucine 311–valine 331, and glutamine 366–leucine 386.

This sequence belongs to the glycosyltransferase 4 family. MraY subfamily. Mg(2+) is required as a cofactor.

It is found in the cell inner membrane. The catalysed reaction is UDP-N-acetyl-alpha-D-muramoyl-L-alanyl-gamma-D-glutamyl-meso-2,6-diaminopimeloyl-D-alanyl-D-alanine + di-trans,octa-cis-undecaprenyl phosphate = di-trans,octa-cis-undecaprenyl diphospho-N-acetyl-alpha-D-muramoyl-L-alanyl-D-glutamyl-meso-2,6-diaminopimeloyl-D-alanyl-D-alanine + UMP. It participates in cell wall biogenesis; peptidoglycan biosynthesis. Catalyzes the initial step of the lipid cycle reactions in the biosynthesis of the cell wall peptidoglycan: transfers peptidoglycan precursor phospho-MurNAc-pentapeptide from UDP-MurNAc-pentapeptide onto the lipid carrier undecaprenyl phosphate, yielding undecaprenyl-pyrophosphoryl-MurNAc-pentapeptide, known as lipid I. The sequence is that of Phospho-N-acetylmuramoyl-pentapeptide-transferase from Cupriavidus metallidurans (strain ATCC 43123 / DSM 2839 / NBRC 102507 / CH34) (Ralstonia metallidurans).